Here is a 255-residue protein sequence, read N- to C-terminus: Myb-related protein Zm38 (255 aa).

HTH myb-type domains lie at 9 to 61 (KAHT…INYL) and 62 to 116 (RPDL…RRKL). 2 consecutive DNA-binding regions (H-T-H motif) follow at residues 37 to 61 (WRSL…INYL) and 89 to 112 (WSLI…NTHV).

It localises to the nucleus. Transcription factor that negatively regulates genes involved in anthocyanin biosynthesis. This is Myb-related protein Zm38 from Zea mays (Maize).